The chain runs to 136 residues: Sec-independent protein translocase protein TatB (136 aa).

The chain crosses the membrane as a helical span at residues 2-22; the sequence is FGSVGWGELLVLLIVGLVVLG. The segment at 107–136 is disordered; it reads VTEPAPTPIVNPELAKPAEPGPTRYDADAT.

The protein belongs to the TatB family. In terms of assembly, the Tat system comprises two distinct complexes: a TatABC complex, containing multiple copies of TatA, TatB and TatC subunits, and a separate TatA complex, containing only TatA subunits. Substrates initially bind to the TatABC complex, which probably triggers association of the separate TatA complex to form the active translocon.

It localises to the cell membrane. Its function is as follows. Part of the twin-arginine translocation (Tat) system that transports large folded proteins containing a characteristic twin-arginine motif in their signal peptide across membranes. Together with TatC, TatB is part of a receptor directly interacting with Tat signal peptides. TatB may form an oligomeric binding site that transiently accommodates folded Tat precursor proteins before their translocation. The protein is Sec-independent protein translocase protein TatB of Mycobacteroides abscessus (strain ATCC 19977 / DSM 44196 / CCUG 20993 / CIP 104536 / JCM 13569 / NCTC 13031 / TMC 1543 / L948) (Mycobacterium abscessus).